The sequence spans 333 residues: MTSDSAETTPLRDSSETARWQDYFQLMKPRVMSLVVFTGLTGLLAARAPIHPVLAAIAVLCIAVGAGASGALNMWYDADIDQKMRRTRGRPVPAGKIKGEEAASLGVVLSLLSVMFLGFAVNWLAAGLLAFTIVFYAVVYTMWLKRWTAQNIVIGGLAGALPPAIGWAAATGSAPLNAWLMVAIIFFWTPPHFWALSLYVTTDYAKAGVPMLPVVKGARETRKQILLYSLILFPICLSPVLTGLGGPIYLAVSGLGGLVFLLLAWRVFASKAGDAADPRVADRALYDVTEDEKAAGAKAARNLFAFSILYLFALFAALLGEAVTGVRPLELLK.

The next 8 helical transmembrane spans lie at 31-51, 52-72, 115-135, 152-172, 178-198, 223-243, 244-264, and 303-323; these read VMSL…APIH, PVLA…SGAL, MFLG…TIVF, IVIG…AATG, AWLM…ALSL, KQIL…VLTG, LGGP…LLLA, and LFAF…GEAV.

This sequence belongs to the UbiA prenyltransferase family. Protoheme IX farnesyltransferase subfamily.

It localises to the cell inner membrane. It catalyses the reaction heme b + (2E,6E)-farnesyl diphosphate + H2O = Fe(II)-heme o + diphosphate. It participates in porphyrin-containing compound metabolism; heme O biosynthesis; heme O from protoheme: step 1/1. Functionally, converts heme B (protoheme IX) to heme O by substitution of the vinyl group on carbon 2 of heme B porphyrin ring with a hydroxyethyl farnesyl side group. The protein is Protoheme IX farnesyltransferase of Caulobacter vibrioides (strain ATCC 19089 / CIP 103742 / CB 15) (Caulobacter crescentus).